A 341-amino-acid chain; its full sequence is Anthranilate phosphoribosyltransferase (341 aa).

5-phospho-alpha-D-ribose 1-diphosphate-binding positions include G83, 86–87 (GD), T91, 93–96 (NIST), 111–119 (KHGNRGVSS), and S123. An anthranilate-binding site is contributed by G83. Mg(2+) is bound at residue S95. N114 lines the anthranilate pocket. Residue R169 coordinates anthranilate. Residues D228 and E229 each contribute to the Mg(2+) site.

Belongs to the anthranilate phosphoribosyltransferase family. Homodimer. Mg(2+) is required as a cofactor.

It carries out the reaction N-(5-phospho-beta-D-ribosyl)anthranilate + diphosphate = 5-phospho-alpha-D-ribose 1-diphosphate + anthranilate. Its pathway is amino-acid biosynthesis; L-tryptophan biosynthesis; L-tryptophan from chorismate: step 2/5. In terms of biological role, catalyzes the transfer of the phosphoribosyl group of 5-phosphorylribose-1-pyrophosphate (PRPP) to anthranilate to yield N-(5'-phosphoribosyl)-anthranilate (PRA). The protein is Anthranilate phosphoribosyltransferase of Cupriavidus necator (strain ATCC 17699 / DSM 428 / KCTC 22496 / NCIMB 10442 / H16 / Stanier 337) (Ralstonia eutropha).